A 1765-amino-acid chain; its full sequence is RANBP2-like and GRIP domain-containing protein 8 (1765 aa).

T19 carries the post-translational modification Phosphothreonine. S21 bears the Phosphoserine mark. TPR repeat units follow at residues 26–59, 60–93, and 648–681; these read SMKG…QERD, PKAH…NPTQ, and EDAH…VSYW. The disordered stretch occupies residues 760–804; that stretch reads GPLYKNGSLRNADSEIKHSTPSPTKYSLSPSKSYKYSPETPPRWT. Residues 778–797 are compositionally biased toward low complexity; the sequence is STPSPTKYSLSPSKSYKYSP. One can recognise a RanBD1 1 domain in the interval 1036–1172; the sequence is HFEPVVQMPE…FEECQRLLLD (137 aa). Disordered stretches follow at residues 1216-1247 and 1306-1330; these read TEEE…PTLE and AKLN…EERD. Polar residues predominate over residues 1231–1244; it reads SDTTIKPNAENTGP. Positions 1317-1329 are enriched in acidic residues; that stretch reads TDEESVVTQEEER. The region spanning 1333 to 1469 is the RanBD1 2 domain; that stretch reads YFEPVVPLPD…FDEAKTAQEK (137 aa). Residues 1580–1593 show a composition bias toward polar residues; that stretch reads NNSETSSVAQSGSE. Disordered regions lie at residues 1580-1621 and 1746-1765; these read NNSE…KNLS and KGKL…RSSG. A compositionally biased stretch (basic and acidic residues) spans 1594–1617; the sequence is SKVEPKKCELSKNSDIEQSSDSKV. The GRIP domain maps to 1702–1752; the sequence is REKSAANLEYLKNVLLQFIFLKPGSERERLLPVINTMLQLSPEEKGKLAAV.

In terms of assembly, interacts with GTP-bound ARL1.

This is RANBP2-like and GRIP domain-containing protein 8 (RGPD8) from Homo sapiens (Human).